We begin with the raw amino-acid sequence, 346 residues long: Uroporphyrinogen decarboxylase (346 aa).

Substrate contacts are provided by residues 23–27, D73, Y151, S206, and H321; that span reads RQAGR.

It belongs to the uroporphyrinogen decarboxylase family. Homodimer.

It is found in the cytoplasm. The catalysed reaction is uroporphyrinogen III + 4 H(+) = coproporphyrinogen III + 4 CO2. Its pathway is porphyrin-containing compound metabolism; protoporphyrin-IX biosynthesis; coproporphyrinogen-III from 5-aminolevulinate: step 4/4. Its function is as follows. Catalyzes the decarboxylation of four acetate groups of uroporphyrinogen-III to yield coproporphyrinogen-III. In Aliarcobacter butzleri (strain RM4018) (Arcobacter butzleri), this protein is Uroporphyrinogen decarboxylase.